Reading from the N-terminus, the 1222-residue chain is Alpha-mannosidase D (1222 aa).

Positions methionine 1–threonine 21 are cleaved as a signal peptide. Over phenylalanine 22–leucine 1170 the chain is Extracellular. Zn(2+)-binding residues include histidine 71 and aspartate 73. An N-linked (GlcNAc...) asparagine glycan is attached at asparagine 175. Zn(2+) contacts are provided by aspartate 185 and histidine 453. Aspartate 185 acts as the Nucleophile in catalysis. N-linked (GlcNAc...) asparagine glycosylation is found at asparagine 492, asparagine 496, asparagine 547, asparagine 551, asparagine 566, asparagine 613, asparagine 665, asparagine 768, asparagine 785, asparagine 952, asparagine 981, asparagine 1069, and asparagine 1084. Low complexity predominate over residues lysine 493 to threonine 549. The segment at lysine 493–glutamate 554 is disordered. Residues isoleucine 1171–valine 1191 traverse the membrane as a helical segment. At threonine 1192–proline 1222 the chain is on the cytoplasmic side. Positions leucine 1202–leucine 1211 are enriched in low complexity. The interval leucine 1202–proline 1222 is disordered. Positions isoleucine 1212–proline 1222 are enriched in polar residues.

This sequence belongs to the glycosyl hydrolase 38 family. Zn(2+) is required as a cofactor.

The protein localises to the membrane. The catalysed reaction is Hydrolysis of terminal, non-reducing alpha-D-mannose residues in alpha-D-mannosides.. The chain is Alpha-mannosidase D (manD) from Dictyostelium discoideum (Social amoeba).